We begin with the raw amino-acid sequence, 160 residues long: Coat protein TP3 (160 aa).

It is found in the virion. In Thermoproteus tenax (TTV1), this protein is Coat protein TP3.